Consider the following 261-residue polypeptide: Putative cysteine protease YopT-like y4zC (261 aa).

Residues 1-15 show a composition bias toward polar residues; it reads MHSPISGSFTSSTQV. 2 disordered regions span residues 1–48 and 54–73; these read MHSP…CPDK and SKPQ…ARPS. A compositionally biased stretch (low complexity) spans 61 to 73; sequence PNNPSTSSPARPS. Residues Cys93, His205, and Asp220 contribute to the active site.

The protein belongs to the peptidase C58 family.

Its function is as follows. Potential cysteine protease, which may play a central role after invasion of host cell. In Sinorhizobium fredii (strain NBRC 101917 / NGR234), this protein is Putative cysteine protease YopT-like y4zC.